Here is a 386-residue protein sequence, read N- to C-terminus: MDTERHATLLLDLVWPEVDEKAQGFIYAKDFPLVVSRMEEILNRGKLERDRAQLVSETGREILRKFGSDQEFFKVYKEDFRELFDGLVGTSFKSAVKSCAGDGVLDRLQDSQAVDGIQDEKTSSHALQEEVMRLREQVRVLSSKNDEKDREITARDEIIADLQGKDASPAGSPRSLQRMRTLQARVTSLEDELSFRDEVIREKDRELLNLTKRVGEFKDKYQFLEREFQFYKGHREQKSPDSIKEATRHEFIISELRRKITEQSEIIGQMRMQVEAKPGALHPQGIGSTAGLPLNLPLRLVLRLIIGAILAYLAFDIGIRSLKAVGGLFGSSSPATLTPKSELSWWEQNTLLSKLLWFFKDLFDTYNLDAGRDEVVSANYDKLFGV.

Residues 117-232 (IQDEKTSSHA…FLEREFQFYK (116 aa)) are a coiled coil. A helical membrane pass occupies residues 296–315 (LPLRLVLRLIIGAILAYLAF).

The protein belongs to the MPS2 family.

It localises to the nucleus membrane. The protein resides in the cytoplasm. The protein localises to the cytoskeleton. It is found in the microtubule organizing center. Its subcellular location is the spindle pole body. Its function is as follows. Component of the spindle pole body (SPB) required for insertion of the nascent SPB into the nuclear envelope and for the proper execution of spindle pole body (SPB) duplication. In Lachancea thermotolerans (strain ATCC 56472 / CBS 6340 / NRRL Y-8284) (Yeast), this protein is Monopolar spindle protein 2 (MPS2).